Reading from the N-terminus, the 382-residue chain is Dual-specificity RNA methyltransferase RlmN (382 aa).

The active-site Proton acceptor is Glu96. Positions 102 to 342 (QGKRGTLCVS…VRTTRGEDID (241 aa)) constitute a Radical SAM core domain. A disulfide bridge links Cys109 with Cys345. Cys116, Cys120, and Cys123 together coordinate [4Fe-4S] cluster. S-adenosyl-L-methionine-binding positions include 170–171 (GE), Ser202, 224–226 (SLH), and Asn302. Cys345 serves as the catalytic S-methylcysteine intermediate.

Belongs to the radical SAM superfamily. RlmN family. [4Fe-4S] cluster serves as cofactor.

It is found in the cytoplasm. The enzyme catalyses adenosine(2503) in 23S rRNA + 2 reduced [2Fe-2S]-[ferredoxin] + 2 S-adenosyl-L-methionine = 2-methyladenosine(2503) in 23S rRNA + 5'-deoxyadenosine + L-methionine + 2 oxidized [2Fe-2S]-[ferredoxin] + S-adenosyl-L-homocysteine. It catalyses the reaction adenosine(37) in tRNA + 2 reduced [2Fe-2S]-[ferredoxin] + 2 S-adenosyl-L-methionine = 2-methyladenosine(37) in tRNA + 5'-deoxyadenosine + L-methionine + 2 oxidized [2Fe-2S]-[ferredoxin] + S-adenosyl-L-homocysteine. In terms of biological role, specifically methylates position 2 of adenine 2503 in 23S rRNA and position 2 of adenine 37 in tRNAs. m2A2503 modification seems to play a crucial role in the proofreading step occurring at the peptidyl transferase center and thus would serve to optimize ribosomal fidelity. This Pseudomonas syringae pv. tomato (strain ATCC BAA-871 / DC3000) protein is Dual-specificity RNA methyltransferase RlmN.